The chain runs to 621 residues: GPI-anchor transamidase component GPAA1 (621 aa).

Residues 2 to 19 lie on the Cytoplasmic side of the membrane; it reads GLLSDPVRRRALARLVLR. A helical transmembrane segment spans residues 20-41; sequence LNAPLCVLSYVAGIAWFLALVF. The Lumenal portion of the chain corresponds to 42-370; it reads PPLTQRTYMS…LLPGLSRFVS (329 aa). A 2-acyl-6-[6-phosphoethanolamine-alpha-D-mannosyl-(1-&gt;2)-6-phosphoethanolamine-alpha-D-mannosyl-(1-&gt;6)-2-phosphoethanolamine-alpha-D-mannosyl-(1-&gt;4)-alpha-D-glucosaminyl]-1-(1-radyl,2-acyl-sn-glycero-3-phospho)-1D-myo-inositol is bound by residues Tyr-49 and Ser-51. A glycan (N-linked (GlcNAc...) asparagine) is linked at Asn-203. Cys-259 and Cys-266 are oxidised to a cystine. The a 2-acyl-6-[6-phosphoethanolamine-alpha-D-mannosyl-(1-&gt;2)-6-phosphoethanolamine-alpha-D-mannosyl-(1-&gt;6)-2-phosphoethanolamine-alpha-D-mannosyl-(1-&gt;4)-alpha-D-glucosaminyl]-1-(1-radyl,2-acyl-sn-glycero-3-phospho)-1D-myo-inositol site is built by His-354, Gln-355, and Ser-356. Gln-355 serves as a coordination point for Mg(2+). A helical transmembrane segment spans residues 371-393; sequence IGLYMPAVGFLLLVLGLKALELW. At 394 to 425 the chain is on the cytoplasmic side; that stretch reads MQLHEAGMGLEEPGGAPGPSVPLPPSQGVGLA. Residues 426 to 450 traverse the membrane as a helical segment; the sequence is SLVAPLLISQAMGLALYVLPVLGQH. Residues 451–462 lie on the Lumenal side of the membrane; the sequence is VATQHFPVAEAE. Residues 463–483 traverse the membrane as a helical segment; it reads AVVLTLLAIYAAGLALPHNTH. The Cytoplasmic segment spans residues 484–495; it reads RVVSTQAPDRGW. 2 helical membrane-spanning segments follow: residues 496-519 and 520-536; these read MALKLVALIYLALQLGCIALTNFS and LGFLLATTMVPTAALAK. The Cytoplasmic portion of the chain corresponds to 537-540; it reads PHGP. The chain crosses the membrane as a helical span at residues 541–563; it reads RTLYAALLVLTSPAATLLGSLFL. Residues 564 to 597 lie on the Lumenal side of the membrane; that stretch reads WRELQEAPLSLAEGWQLFLAALAQGVLEHHTYGA. The helical transmembrane segment at 598 to 619 threads the bilayer; sequence LLFPLLSLGLYPCWLLFWNVLF. The Cytoplasmic portion of the chain corresponds to 620–621; the sequence is WK.

As to quaternary structure, heteropentamer. Part of the GPI-anchor transamidase complex, consisting of PIGK, PIGT, PIGS, PIGU and GAA1. Interacts with PIGK. As to expression, ubiquitously expressed in fetal and adult tissues. Expressed at higher levels in fetal tissues than adult tissues.

The protein localises to the endoplasmic reticulum membrane. It functions in the pathway glycolipid biosynthesis; glycosylphosphatidylinositol-anchor biosynthesis. Its function is as follows. Component of the glycosylphosphatidylinositol-anchor (GPI-anchor) transamidase (GPI-T) complex that catalyzes the formation of the linkage between a proprotein and a GPI-anchor and participates in GPI anchored protein biosynthesis. Binds GPI-anchor. In Homo sapiens (Human), this protein is GPI-anchor transamidase component GPAA1.